The primary structure comprises 63 residues: Chymotrypsin/elastase isoinhibitor 1 (63 aa).

Cystine bridges form between C5/C38, C14/C33, C17/C29, C21/C60, and C40/C54. Positions 5–60 constitute a TIL domain; it reads CGPNEVWTECTGCEMKCGPDENTPCPLMCRRPSCECSPGRGMRRTNDGKCIPASQC.

Belongs to the serine protease inhibitor-like (TIL domain-containing) family.

Its subcellular location is the secreted. Its function is as follows. Defends the organism against the host's proteinases. The polypeptide is Chymotrypsin/elastase isoinhibitor 1 (Ascaris suum (Pig roundworm)).